We begin with the raw amino-acid sequence, 404 residues long: ATP phosphoribosyltransferase regulatory subunit (404 aa).

It belongs to the class-II aminoacyl-tRNA synthetase family. HisZ subfamily. As to quaternary structure, heteromultimer composed of HisG and HisZ subunits.

It is found in the cytoplasm. It functions in the pathway amino-acid biosynthesis; L-histidine biosynthesis; L-histidine from 5-phospho-alpha-D-ribose 1-diphosphate: step 1/9. In terms of biological role, required for the first step of histidine biosynthesis. May allow the feedback regulation of ATP phosphoribosyltransferase activity by histidine. The polypeptide is ATP phosphoribosyltransferase regulatory subunit (Trichormus variabilis (strain ATCC 29413 / PCC 7937) (Anabaena variabilis)).